We begin with the raw amino-acid sequence, 435 residues long: Solute carrier family 38 member 8 (435 aa).

11 helical membrane passes run Ala-29–Phe-49, Val-55–Ile-75, Ile-100–Leu-120, Phe-151–Ala-171, Ile-178–Trp-198, Val-218–Cys-240, Trp-250–Val-270, Ile-295–Phe-315, Met-348–Leu-368, Ile-374–Ala-394, and Val-410–Ala-430.

It belongs to the amino acid/polyamine transporter 2 family. Expressed in fetal and adult brain, and spinal cord. In the brain, it is localized in the cell body and axon of the majority of neuronal cells and in a subset of glial cells. Found throughout the neuronal retina, with higher expression levels in the inner and outer plexiform layers and the photoreceptor layer. Very weak expression is also present in the kidneys, thymus, and testes.

The protein resides in the membrane. It localises to the cytoplasm. Its subcellular location is the cell cortex. It is found in the cell projection. The protein localises to the axon. The enzyme catalyses L-glutamine(out) = L-glutamine(in). It catalyses the reaction L-alanine(in) = L-alanine(out). The catalysed reaction is L-histidine(out) = L-histidine(in). It carries out the reaction L-aspartate(out) = L-aspartate(in). The enzyme catalyses L-arginine(in) = L-arginine(out). It catalyses the reaction L-leucine(in) = L-leucine(out). Functionally, electrogenic sodium-dependent amino acid transporter with a preference for L-glutamine, L-alanine, L-histidine, L-aspartate and L-arginine. May facilitate glutamine uptake in both excitatory and inhibitory neurons. The transport mechanism and stoichiometry remain to be elucidated. The sequence is that of Solute carrier family 38 member 8 from Homo sapiens (Human).